Consider the following 79-residue polypeptide: Cell division topological specificity factor (79 aa).

The protein belongs to the MinE family.

Its function is as follows. Prevents the cell division inhibition by proteins MinC and MinD at internal division sites while permitting inhibition at polar sites. This ensures cell division at the proper site by restricting the formation of a division septum at the midpoint of the long axis of the cell. The protein is Cell division topological specificity factor of Nitratiruptor sp. (strain SB155-2).